The chain runs to 245 residues: Tryptophan synthase alpha chain (245 aa).

Active-site proton acceptor residues include glutamate 37 and aspartate 48.

This sequence belongs to the TrpA family. As to quaternary structure, tetramer of two alpha and two beta chains.

It catalyses the reaction (1S,2R)-1-C-(indol-3-yl)glycerol 3-phosphate + L-serine = D-glyceraldehyde 3-phosphate + L-tryptophan + H2O. The protein operates within amino-acid biosynthesis; L-tryptophan biosynthesis; L-tryptophan from chorismate: step 5/5. In terms of biological role, the alpha subunit is responsible for the aldol cleavage of indoleglycerol phosphate to indole and glyceraldehyde 3-phosphate. The chain is Tryptophan synthase alpha chain from Saccharolobus solfataricus (strain ATCC 35092 / DSM 1617 / JCM 11322 / P2) (Sulfolobus solfataricus).